Consider the following 152-residue polypeptide: Protein CHLOROPLAST VESICULATION (152 aa).

A chloroplast-targeting transit peptide spans 1 to 22 (MAGRISCCLNLPPLDSNSAQSL). Residues 48-65 (CSFVLGVAATVVIGGIQI) form a helical membrane-spanning segment. The tract at residues 92–152 (RWSDKRTCPP…RVNRGGCFSV (61 aa)) is important for chloroplast destabilization and the formation of CV-containing vesicles.

As to quaternary structure, interacts with the photosystem II subunit PsbO1 via its C-terminal region in the chloroplast thylakoid membrane and in CV-containing vesicles (CCVs). In terms of tissue distribution, mostly expressed in senescent and mature leaves but not in young leaves.

It is found in the plastid. Its subcellular location is the chloroplast membrane. It localises to the chloroplast thylakoid membrane. The protein resides in the chloroplast envelope. The protein localises to the vacuole. It is found in the vesicle. Functionally, triggers stress-induced chloroplast degradation, independently of autophagy and senescence-associated vacuoles. After targeting to the chloroplast, triggers its destabilization and subsequent disassembly, inducing the formation of CV-containing vesicles (CCVs) carrying stromal proteins, envelope membrane proteins, and thylakoid membrane proteins which are released from the chloroplasts and mobilized to the vacuole for proteolysis. The chain is Protein CHLOROPLAST VESICULATION from Arabidopsis thaliana (Mouse-ear cress).